The primary structure comprises 160 residues: Lipoprotein signal peptidase (160 aa).

3 helical membrane passes run 6 to 26 (VWSS…IKYL), 58 to 78 (LAWL…AFVL), and 95 to 115 (FALV…HGYV). Active-site residues include D117 and D135. A helical membrane pass occupies residues 127-147 (SFAVFNLADAFITIGAGLIIL).

This sequence belongs to the peptidase A8 family.

The protein localises to the cell inner membrane. It carries out the reaction Release of signal peptides from bacterial membrane prolipoproteins. Hydrolyzes -Xaa-Yaa-Zaa-|-(S,diacylglyceryl)Cys-, in which Xaa is hydrophobic (preferably Leu), and Yaa (Ala or Ser) and Zaa (Gly or Ala) have small, neutral side chains.. The protein operates within protein modification; lipoprotein biosynthesis (signal peptide cleavage). Its function is as follows. This protein specifically catalyzes the removal of signal peptides from prolipoproteins. The polypeptide is Lipoprotein signal peptidase (Brucella abortus (strain S19)).